Here is a 296-residue protein sequence, read N- to C-terminus: Nucleotide-binding protein spyM18_0713 (296 aa).

An ATP-binding site is contributed by 13–20 (GMSGAGKT). Residue 63–66 (DMRS) coordinates GTP.

Belongs to the RapZ-like family.

In terms of biological role, displays ATPase and GTPase activities. This is Nucleotide-binding protein spyM18_0713 from Streptococcus pyogenes serotype M18 (strain MGAS8232).